Consider the following 238-residue polypeptide: Adapter protein MecA (238 aa).

The segment covering 120–136 (QQQKDNKQNQDQNERNR) has biased composition (basic and acidic residues). Residues 120-139 (QQQKDNKQNQDQNERNRQNT) form a disordered region.

Belongs to the MecA family. As to quaternary structure, homodimer.

Enables the recognition and targeting of unfolded and aggregated proteins to the ClpC protease or to other proteins involved in proteolysis. This Staphylococcus saprophyticus subsp. saprophyticus (strain ATCC 15305 / DSM 20229 / NCIMB 8711 / NCTC 7292 / S-41) protein is Adapter protein MecA.